A 675-amino-acid chain; its full sequence is DNA ligase (675 aa).

NAD(+)-binding positions include 43 to 47 (DYEYD), 92 to 93 (SM), and E122. K124 acts as the N6-AMP-lysine intermediate in catalysis. R145, E179, K295, and K319 together coordinate NAD(+). C413, C416, C431, and C436 together coordinate Zn(2+). The 79-residue stretch at 597–675 (SPDGYYKGKK…ETEAIAKFEQ (79 aa)) folds into the BRCT domain.

The protein belongs to the NAD-dependent DNA ligase family. LigA subfamily. Mg(2+) serves as cofactor. The cofactor is Mn(2+).

The enzyme catalyses NAD(+) + (deoxyribonucleotide)n-3'-hydroxyl + 5'-phospho-(deoxyribonucleotide)m = (deoxyribonucleotide)n+m + AMP + beta-nicotinamide D-nucleotide.. DNA ligase that catalyzes the formation of phosphodiester linkages between 5'-phosphoryl and 3'-hydroxyl groups in double-stranded DNA using NAD as a coenzyme and as the energy source for the reaction. It is essential for DNA replication and repair of damaged DNA. The protein is DNA ligase of Pediococcus pentosaceus (strain ATCC 25745 / CCUG 21536 / LMG 10740 / 183-1w).